A 513-amino-acid polypeptide reads, in one-letter code: 2,3-bisphosphoglycerate-independent phosphoglycerate mutase (513 aa).

2 residues coordinate Mn(2+): Asp13 and Ser63. Ser63 functions as the Phosphoserine intermediate in the catalytic mechanism. Residues His124, 154–155, Arg186, Arg192, 262–265, and Lys335 contribute to the substrate site; these read RD and RADR. Mn(2+)-binding residues include Asp403, His407, Asp444, His445, and His463.

Belongs to the BPG-independent phosphoglycerate mutase family. Monomer. Requires Mn(2+) as cofactor.

It carries out the reaction (2R)-2-phosphoglycerate = (2R)-3-phosphoglycerate. The protein operates within carbohydrate degradation; glycolysis; pyruvate from D-glyceraldehyde 3-phosphate: step 3/5. Functionally, catalyzes the interconversion of 2-phosphoglycerate and 3-phosphoglycerate. The chain is 2,3-bisphosphoglycerate-independent phosphoglycerate mutase from Myxococcus xanthus (strain DK1622).